The primary structure comprises 472 residues: Ribosomal protein uS12 methylthiotransferase RimO (472 aa).

The MTTase N-terminal domain occupies 33 to 143 (NRIGFVSLGC…VLKHVHKYVP (111 aa)). Residues cysteine 42, cysteine 78, cysteine 107, cysteine 175, cysteine 179, and cysteine 182 each coordinate [4Fe-4S] cluster. Residues 161–398 (LTPKHYAYLK…MEVQAEISAE (238 aa)) enclose the Radical SAM core domain. Positions 401 to 467 (ARFVGRTLDI…EHDLWAEVVD (67 aa)) constitute a TRAM domain.

Belongs to the methylthiotransferase family. RimO subfamily. [4Fe-4S] cluster is required as a cofactor.

The protein localises to the cytoplasm. It catalyses the reaction L-aspartate(89)-[ribosomal protein uS12]-hydrogen + (sulfur carrier)-SH + AH2 + 2 S-adenosyl-L-methionine = 3-methylsulfanyl-L-aspartate(89)-[ribosomal protein uS12]-hydrogen + (sulfur carrier)-H + 5'-deoxyadenosine + L-methionine + A + S-adenosyl-L-homocysteine + 2 H(+). Its function is as follows. Catalyzes the methylthiolation of an aspartic acid residue of ribosomal protein uS12. The protein is Ribosomal protein uS12 methylthiotransferase RimO of Shewanella baltica (strain OS185).